The sequence spans 295 residues: MTKILGSDLIKRGMAQMQKGGVIMDVVNAEQARIAEAAGAVAVMALERVPSDIRAAGGVARMANTAIVREVMEAVSIPVMAKARIGHIVEARVLEAMGVDYIDESEVLTPADEEFHLLKSDYTVPFVCGCRDLGEALRRIGEGASMLRTKGEPGTGNVVEAVRHLRKVNAQLRKVINMSHDELMTEAKHLGAPFELLLQIKTLGKLPVVNFAAGGIATPADAALMMELGADGVFVGSGIFKSENPEKFAKAIVQATTHYQDYDLIARLSADLGEPMRGLEISELAVQDRMQERGW.

Residue D25 coordinates D-ribose 5-phosphate. Catalysis depends on K82, which acts as the Schiff-base intermediate with D-ribose 5-phosphate. G154 contacts D-ribose 5-phosphate. R166 contributes to the D-glyceraldehyde 3-phosphate binding site. D-ribose 5-phosphate is bound by residues G215 and 236-237 (GS).

The protein belongs to the PdxS/SNZ family. In terms of assembly, in the presence of PdxT, forms a dodecamer of heterodimers.

It carries out the reaction aldehydo-D-ribose 5-phosphate + D-glyceraldehyde 3-phosphate + L-glutamine = pyridoxal 5'-phosphate + L-glutamate + phosphate + 3 H2O + H(+). It functions in the pathway cofactor biosynthesis; pyridoxal 5'-phosphate biosynthesis. Functionally, catalyzes the formation of pyridoxal 5'-phosphate from ribose 5-phosphate (RBP), glyceraldehyde 3-phosphate (G3P) and ammonia. The ammonia is provided by the PdxT subunit. Can also use ribulose 5-phosphate and dihydroxyacetone phosphate as substrates, resulting from enzyme-catalyzed isomerization of RBP and G3P, respectively. This chain is Pyridoxal 5'-phosphate synthase subunit PdxS, found in Actinobacillus pleuropneumoniae serotype 5b (strain L20).